We begin with the raw amino-acid sequence, 632 residues long: 2-oxoacid:ferredoxin oxidoreductase subunit alpha (632 aa).

The YPITP motif motif lies at 253–257 (YPITP). Substrate contacts are provided by Thr256 and Arg344.

In terms of assembly, heterodimer composed of an alpha and a beta subunit.

Its subcellular location is the cytoplasm. It catalyses the reaction a 2-oxocarboxylate + 2 oxidized [2Fe-2S]-[ferredoxin] + CoA = an acyl-CoA + 2 reduced [2Fe-2S]-[ferredoxin] + CO2 + H(+). Functionally, catalyzes the coenzyme A-dependent oxidative decarboxylation of different 2-oxoacids such as 2-oxoglutarate, pyruvate and 2-oxobutyrate to form their CoA derivatives. The protein is 2-oxoacid:ferredoxin oxidoreductase subunit alpha of Sulfolobus sp.